Here is a 289-residue protein sequence, read N- to C-terminus: Cytochrome bc1 complex cytochrome c subunit (289 aa).

The span at 1 to 11 (MKKLGFTRSSR) shows a compositional bias: basic residues. Positions 1-28 (MKKLGFTRSSRRCSQPQEREQESERSRR) are disordered. Residues 37 to 55 (GLLLLVALTVSGGLAAVLT) traverse the membrane as a helical segment. 2 Cytochrome c domains span residues 69-149 (ALLR…QANG) and 170-248 (TDLG…RTVI). The heme c site is built by C82, C85, H86, C183, C186, and H187. The helical transmembrane segment at 267-287 (GMAIWIIGMVTAIGLALWIGA) threads the bilayer.

In terms of assembly, the cytochrome bc1 complex is composed of a cytochrome b (QcrB), the Rieske iron-sulfur protein (QcrA) and a diheme cytochrome c (QcrC) subunit. Post-translationally, binds 2 heme c groups covalently per subunit.

It is found in the cell membrane. It carries out the reaction a quinol + 2 Fe(III)-[cytochrome c](out) = a quinone + 2 Fe(II)-[cytochrome c](out) + 2 H(+)(out). In terms of biological role, cytochrome b subunit of the cytochrome bc1 complex, an essential component of the respiratory electron transport chain required for ATP synthesis. The bc1 complex catalyzes the oxidation of ubiquinol and the reduction of cytochrome c in the respiratory chain. The bc1 complex operates through a Q-cycle mechanism that couples electron transfer to generation of the proton gradient that drives ATP synthesis. The protein is Cytochrome bc1 complex cytochrome c subunit (qcrC) of Mycobacterium leprae (strain TN).